The following is a 520-amino-acid chain: Keratin, type II cytoskeletal 8 (520 aa).

Low complexity predominate over residues 1-19; it reads MSTYSKKTSYTVKSSSSGS. Residues 1 to 20 are disordered; the sequence is MSTYSKKTSYTVKSSSSGSI. The head stretch occupies residues 2–114; sequence STYSKKTSYT…DPNIQIVRTQ (113 aa). Serine 28 bears the Phosphoserine mark. A coil 1A region spans residues 115–150; it reads EKEQIKTLNNRFASFIDKVRFLEQQNKMLETKWSLL. An IF rod domain is found at 115–426; it reads EKEQIKTLNN…KLLEGEEDRL (312 aa). Positions 151–166 are linker 1; sequence QNQTATRSNIDAMFEA. The coil 1B stretch occupies residues 168 to 259; that stretch reads IANLRRQLDS…QIFEEEIREL (92 aa). The linker 12 stretch occupies residues 260–283; it reads QSQIKDTSVVVEMDNSRNLDMDAI. Residues 284–422 form a coil 2 region; the sequence is VAEVRAQYED…ATYRKLLEGE (139 aa). The segment at 423-520 is tail; sequence EDRLATGIKA…VSESSEVVQD (98 aa).

It belongs to the intermediate filament family. In terms of assembly, heterotetramer of two type I and two type II keratins. Keratin-8 associates with keratin-18. As to expression, expressed in simple epithelia.

Its subcellular location is the cytoplasm. It localises to the nucleus. It is found in the nucleoplasm. The protein resides in the nucleus matrix. In terms of biological role, together with KRT19, helps to link the contractile apparatus to dystrophin at the costameres of striated muscle. The sequence is that of Keratin, type II cytoskeletal 8 from Danio rerio (Zebrafish).